Here is a 583-residue protein sequence, read N- to C-terminus: MSEKLDRESILYKKRHSIAHVMAEAVLELFPNTKIAIGPPIKDGFYYDFDFEKHITEDDLLLIEQKMREILKTGSPFVKEVITKEQALMLFKDEPYKMDLIRGLAITDEISIYKSHNFTDLCKGPHVDNMGKIDPKAFKLTSIAGAYWRGDEKNKMLTRIYGTLWNNEKDLKAYLKLREEIKRRDHRKLGRELDLFSVHEDIGPGLIFFHPNGARIRAIIEDFWREEHFKNGYDVLFTPHIGKSCLWETSGHLDFYKESMFEKMEMDKSNYYVKPMNCPFHIAIYNTGKHSYRDLPFRWAELGTVYRYEKIGALHGTMRVRGFTQDDAHIICAYEQVKSEVQEVLRFALYMWNQFGFADLKAYLSTKPEKAVGDKDDWEMSVKVLEEALIDLNIAYDIDEGGGAFYGPKIDLKIIDSLGREWQMSTIQFDFNLPERFKMTYTAEDGKEKRPFMIHRALLGSIERFFGILVEHYGGAFPVWLAPLQVIIIPVNNVVEEYALEILSLFKNEGIRIKLDNDCNMRMNAKIRQYQSKKVPYMFIIGEKEVVEGKISIRTRTNDQINGLELKEALEFVRLKVKNKEIL.

Residues 185-478 form a catalytic region; the sequence is DHRKLGRELD…LVEHYGGAFP (294 aa). Cys278, His329, and His455 together coordinate Zn(2+).

It belongs to the class-II aminoacyl-tRNA synthetase family. As to quaternary structure, homodimer. Zn(2+) serves as cofactor.

It localises to the cytoplasm. The catalysed reaction is tRNA(Thr) + L-threonine + ATP = L-threonyl-tRNA(Thr) + AMP + diphosphate + H(+). Its function is as follows. Catalyzes the attachment of threonine to tRNA(Thr) in a two-step reaction: L-threonine is first activated by ATP to form Thr-AMP and then transferred to the acceptor end of tRNA(Thr). Also edits incorrectly charged L-seryl-tRNA(Thr). The protein is Threonine--tRNA ligase of Borrelia hermsii (strain HS1 / DAH).